We begin with the raw amino-acid sequence, 333 residues long: Glyceraldehyde-3-phosphate dehydrogenase (333 aa).

NAD(+) is bound by residues 12-13, D36, R80, and S120; that span reads RI. Residues 150–152, T181, R196, 209–210, and R232 contribute to the D-glyceraldehyde 3-phosphate site; these read SCT and TG. Catalysis depends on C151, which acts as the Nucleophile. N314 is a binding site for NAD(+).

This sequence belongs to the glyceraldehyde-3-phosphate dehydrogenase family. Homotetramer.

It is found in the cytoplasm. It carries out the reaction D-glyceraldehyde 3-phosphate + phosphate + NAD(+) = (2R)-3-phospho-glyceroyl phosphate + NADH + H(+). The protein operates within carbohydrate degradation; glycolysis; pyruvate from D-glyceraldehyde 3-phosphate: step 1/5. Functionally, catalyzes the oxidative phosphorylation of glyceraldehyde 3-phosphate (G3P) to 1,3-bisphosphoglycerate (BPG) using the cofactor NAD. The first reaction step involves the formation of a hemiacetal intermediate between G3P and a cysteine residue, and this hemiacetal intermediate is then oxidized to a thioester, with concomitant reduction of NAD to NADH. The reduced NADH is then exchanged with the second NAD, and the thioester is attacked by a nucleophilic inorganic phosphate to produce BPG. The protein is Glyceraldehyde-3-phosphate dehydrogenase (gapB) of Cereibacter sphaeroides (Rhodobacter sphaeroides).